We begin with the raw amino-acid sequence, 456 residues long: Chromosomal replication initiator protein DnaA (456 aa).

The segment at 1 to 83 (MTASLWQQCL…LRFDIGNRPH (83 aa)) is domain I, interacts with DnaA modulators. Residues 83–119 (HPVAIARAPARGAAPVNNLQKSWESKADAKPEPNHKS) form a domain II region. The interval 120-336 (NTNVNYTFEN…GALNRVIANA (217 aa)) is domain III, AAA+ region. ATP-binding residues include Gly-164, Gly-166, Lys-167, and Thr-168. The tract at residues 337–456 (NFTGRAINID…YSNLIRTLSS (120 aa)) is domain IV, binds dsDNA.

The protein belongs to the DnaA family. In terms of assembly, oligomerizes as a right-handed, spiral filament on DNA at oriC.

Its subcellular location is the cytoplasm. In terms of biological role, plays an essential role in the initiation and regulation of chromosomal replication. ATP-DnaA binds to the origin of replication (oriC) to initiate formation of the DNA replication initiation complex once per cell cycle. Binds the DnaA box (a 9 base pair repeat at the origin) and separates the double-stranded (ds)DNA. Forms a right-handed helical filament on oriC DNA; dsDNA binds to the exterior of the filament while single-stranded (ss)DNA is stabiized in the filament's interior. The ATP-DnaA-oriC complex binds and stabilizes one strand of the AT-rich DNA unwinding element (DUE), permitting loading of DNA polymerase. After initiation quickly degrades to an ADP-DnaA complex that is not apt for DNA replication. Binds acidic phospholipids. This is Chromosomal replication initiator protein DnaA from Aeromonas salmonicida (strain A449).